Reading from the N-terminus, the 147-residue chain is Large ribosomal subunit protein uL23A (147 aa).

Residues 1–10 show a composition bias toward low complexity; that stretch reads MAPSAPAKTA. The segment at 1 to 29 is disordered; that stretch reads MAPSAPAKTAKALDAKKKVVKGKRTTHRR. Residues 18–29 show a composition bias toward basic residues; sequence KVVKGKRTTHRR.

This sequence belongs to the universal ribosomal protein uL23 family.

Its function is as follows. This protein binds to a specific region on the 26S rRNA. In Caenorhabditis elegans, this protein is Large ribosomal subunit protein uL23A.